The following is a 641-amino-acid chain: MTTPALLPLSGRRIPPLNLGPPSFPHHRATLRLSEKFILLLILSAFITLCFGAFFFLPDSSKHKRFDLGLEDVLIPHVDAGKGAKNPGVFLIHGPDEHRHREEEERLRNKIRADHEKALEEAKEKLRKSREEIRAEIQTEKNKVVQEMKIKENKPLPPVPIPNLVGIRGGDPEDNDIREKREKIKEMMKHAWDNYRTYGWGHNELRPIARKGHSPNIFGSSQMGATIVDALDTLYIMGLHDEFLDGQRWIEDNLDFSVNSEVSVFEVNIRFIGGLLAAYYLSGEEIFKIKAVQLAEKLLPAFNTPTGIPWAMVNLKSGVGRNWGWASAGSSILAEFGTLHMEFIHLSYLTGDLTYYKKVMHIRKLLQKMDRPNGLYPNYLNPRTGRWGQYHTSVGGLGDSFYEYLLKAWLMSDKTDHEARKMYDDAIEAIEKHLIKKSRGGLTFIGEWKNGHLEKKMGHLACFAGGMFALGADGSRADKAGHYLELGAEIARTCHESYDRTALKLGPESFKFDGAVEAVAVRQAEKYYILRPEVIETYWYLWRFTHDPRYRQWGWEAALAIEKYCRVNGGFSGVKDVYSSTPTHDDVQQSFFLAETLKYLYLLFSGDDLLPLDHWVFNTEAHPLPVLHLANTTLSGNPAVR.

The residue at position 2 (Thr-2) is an N-acetylthreonine. Over 2–36 the chain is Cytoplasmic; it reads TTPALLPLSGRRIPPLNLGPPSFPHHRATLRLSEK. The chain crosses the membrane as a helical; Signal-anchor for type II membrane protein span at residues 37–57; it reads FILLLILSAFITLCFGAFFFL. The Lumenal segment spans residues 58–641; it reads PDSSKHKRFD…TTLSGNPAVR (584 aa). A disordered region spans residues 153–175; that stretch reads NKPLPPVPIPNLVGIRGGDPEDN. A disulfide bridge links Cys-462 with Cys-494. Glu-508 (proton donor) is an active-site residue. Thr-619 serves as a coordination point for Ca(2+). N-linked (GlcNAc...) asparagine glycosylation is present at Asn-631.

It belongs to the glycosyl hydrolase 47 family. Requires Ca(2+) as cofactor. Highest levels of expression in placenta and testis.

Its subcellular location is the golgi apparatus membrane. The catalysed reaction is N(4)-(alpha-D-Man-(1-&gt;2)-alpha-D-Man-(1-&gt;2)-alpha-D-Man-(1-&gt;3)-[alpha-D-Man-(1-&gt;2)-alpha-D-Man-(1-&gt;3)-[alpha-D-Man-(1-&gt;2)-alpha-D-Man-(1-&gt;6)]-alpha-D-Man-(1-&gt;6)]-beta-D-Man-(1-&gt;4)-beta-D-GlcNAc-(1-&gt;4)-beta-D-GlcNAc)-L-asparaginyl-[protein] (N-glucan mannose isomer 9A1,2,3B1,2,3) + 4 H2O = N(4)-(alpha-D-Man-(1-&gt;3)-[alpha-D-Man-(1-&gt;3)-[alpha-D-Man-(1-&gt;6)]-alpha-D-Man-(1-&gt;6)]-beta-D-Man-(1-&gt;4)-beta-D-GlcNAc-(1-&gt;4)-beta-D-GlcNAc)-L-asparaginyl-[protein] (N-glucan mannose isomer 5A1,2) + 4 beta-D-mannose. The enzyme catalyses N(4)-(alpha-D-Man-(1-&gt;2)-alpha-D-Man-(1-&gt;2)-alpha-D-Man-(1-&gt;3)-[alpha-D-Man-(1-&gt;3)-[alpha-D-Man-(1-&gt;2)-alpha-D-Man-(1-&gt;6)]-alpha-D-Man-(1-&gt;6)]-beta-D-Man-(1-&gt;4)-beta-D-GlcNAc-(1-&gt;4)-beta-D-GlcNAc)-L-asparaginyl-[protein] (N-glucan mannose isomer 8A1,2,3B1,3) + 3 H2O = N(4)-(alpha-D-Man-(1-&gt;3)-[alpha-D-Man-(1-&gt;3)-[alpha-D-Man-(1-&gt;6)]-alpha-D-Man-(1-&gt;6)]-beta-D-Man-(1-&gt;4)-beta-D-GlcNAc-(1-&gt;4)-beta-D-GlcNAc)-L-asparaginyl-[protein] (N-glucan mannose isomer 5A1,2) + 3 beta-D-mannose. The protein operates within protein modification; protein glycosylation. Its activity is regulated as follows. Inhibited by both 1-deoxymannojirimycin and kifunensine. Involved in the maturation of Asn-linked oligosaccharides. Progressively trim alpha-1,2-linked mannose residues from Man(9)GlcNAc(2) to produce Man(5)GlcNAc(2). This Homo sapiens (Human) protein is Mannosyl-oligosaccharide 1,2-alpha-mannosidase IB (MAN1A2).